Here is a 288-residue protein sequence, read N- to C-terminus: Energy-coupling factor transporter ATP-binding protein EcfA2 (288 aa).

Residues 3-245 (IEFKNVDYIY…PDWLKKHFLD (243 aa)) enclose the ABC transporter domain. 40-47 (GHTGSGKS) is an ATP binding site.

Belongs to the ABC transporter superfamily. Energy-coupling factor EcfA family. In terms of assembly, forms a stable energy-coupling factor (ECF) transporter complex composed of 2 membrane-embedded substrate-binding proteins (S component), 2 ATP-binding proteins (A component) and 2 transmembrane proteins (T component).

The protein resides in the cell membrane. ATP-binding (A) component of a common energy-coupling factor (ECF) ABC-transporter complex. Unlike classic ABC transporters this ECF transporter provides the energy necessary to transport a number of different substrates. This chain is Energy-coupling factor transporter ATP-binding protein EcfA2, found in Lactobacillus gasseri (strain ATCC 33323 / DSM 20243 / BCRC 14619 / CIP 102991 / JCM 1131 / KCTC 3163 / NCIMB 11718 / NCTC 13722 / AM63).